The chain runs to 38 residues: Histidine decarboxylase small chain (38 aa).

Heterohexamer of 3 large and 3 small chains. The cofactor is pyruvate.

It carries out the reaction L-histidine + H(+) = histamine + CO2. The sequence is that of Histidine decarboxylase small chain from Micrococcus sp.